The chain runs to 306 residues: Triplex capsid protein 2 (306 aa).

It belongs to the herpesviridae TRX2 protein family. As to quaternary structure, interacts with TRX1 and major capisd protein/MCP.

It is found in the virion. The protein localises to the host nucleus. In terms of biological role, structural component of the T=16 icosahedral capsid. The capsid is composed of pentamers and hexamers of major capsid protein/MCP, which are linked together by heterotrimers called triplexes. These triplexes are formed by a single molecule of triplex protein 1/TRX1 and two copies of triplex protein 2/TRX2. Additionally, TRX1 is required for efficient transport of TRX2 to the nucleus, which is the site of capsid assembly. This is Triplex capsid protein 2 from Alcelaphine herpesvirus 1 (strain C500) (AlHV-1).